Consider the following 521-residue polypeptide: Formate--tetrahydrofolate ligase (521 aa).

The protein belongs to the formate--tetrahydrofolate ligase family.

The catalysed reaction is (6S)-5,6,7,8-tetrahydrofolate + formate + ATP = (6R)-10-formyltetrahydrofolate + ADP + phosphate. The protein operates within one-carbon metabolism; tetrahydrofolate interconversion. This chain is Formate--tetrahydrofolate ligase, found in Ureaplasma parvum serovar 3 (strain ATCC 700970).